The chain runs to 628 residues: Propionate--CoA ligase (628 aa).

The protein belongs to the ATP-dependent AMP-binding enzyme family.

The enzyme catalyses propanoate + ATP + CoA = propanoyl-CoA + AMP + diphosphate. It functions in the pathway organic acid metabolism; propanoate degradation. Catalyzes the synthesis of propionyl-CoA from propionate and CoA. Also converts acetate to acetyl-CoA but with a lower specific activity. The chain is Propionate--CoA ligase (prpE) from Escherichia coli (strain K12).